Reading from the N-terminus, the 195-residue chain is Myelin-associated neurite-outgrowth inhibitor (195 aa).

Position 1 is an N-acetylmethionine (Met1). At 1 to 18 (MNPVYSPGSSGVPYANAK) the chain is on the cytoplasmic side. Residue Ser6 is modified to Phosphoserine. The helical transmembrane segment at 19–42 (GIGYPAGFPMGYAAAAPAYSPNMY) threads the bilayer. Residues 43–142 (PGANPTFQAG…PAPLPPPRGN (100 aa)) lie on the Extracellular side of the membrane. The N-linked (GlcNAc...) asparagine glycan is linked to Asn46. The helical transmembrane segment at 143–164 (GVTMGMVAGTTMAMSAGTLLTA) threads the bilayer. Residues 165 to 195 (HSPTPVAPHPVTVPTYRAPGTPTYSYVPPQW) are Cytoplasmic-facing.

Belongs to the FAM168 family. May form homodimers. May interact with DAZAP2, FAM168A, PRDX6, RBM6, TMTC1 and YPEL2. Interacts with CDC27. In terms of processing, N-glycosylated.

Its subcellular location is the cytoplasm. The protein localises to the perinuclear region. The protein resides in the cell membrane. It is found in the cell projection. It localises to the axon. Inhibitor of neuronal axonal outgrowth. Acts as a negative regulator of CDC42 and STAT3 and a positive regulator of STMN2. Positive regulator of CDC27. The chain is Myelin-associated neurite-outgrowth inhibitor (FAM168B) from Bos taurus (Bovine).